Here is a 320-residue protein sequence, read N- to C-terminus: Retron Ec86 reverse transcriptase (320 aa).

One can recognise a Reverse transcriptase domain in the interval 34 to 248 (VETLRLLIYT…SQRKVTGLVI (215 aa)). Residues D119, D197, and D198 each coordinate Mg(2+). Residues 230 to 320 (KKTCISGPRS…GKNPLNKAKT (91 aa)) are necessary and required for recognition and binding of RNA.

The protein belongs to the bacterial reverse transcriptase family.

It catalyses the reaction DNA(n) + a 2'-deoxyribonucleoside 5'-triphosphate = DNA(n+1) + diphosphate. Its function is as follows. Reverse transcriptase (RT) component of antiviral defense system retron Ec86, composed of a non-coding RNA (ncRNA), a ribosyltransferase/DNA-binding protein and this RT. Expression of the 3-gene retron confers protection against bacteriophage T5. At multiplicity of infection (MOI) of 0.02 cultures grow normally when infected with T5 without collapsing, at MOI 2 cultures enter growth stasis. Responsible for synthesis of msDNA (a branched molecule with RNA linked by a 2',5'-phosphodiester bond to ssDNA). The retron transcript serves as primer (from a conserved internal G residue) and template for the reaction, and codes for the RT. Recognizes only its cognate RNA as a primer template. Overexpression of the ncRNA and RT (without the ribosyltransferase), which leads to increased levels of msDNA, is mutagenic in vivo. This may be due to a mismatch in the msDNA stem which binds and sequesters MutS and/or MutL. The polypeptide is Retron Ec86 reverse transcriptase (Escherichia coli).